Consider the following 652-residue polypeptide: tRNA 5-methylaminomethyl-2-thiouridine biosynthesis bifunctional protein MnmC (652 aa).

The segment at 1 to 235 is tRNA (mnm(5)s(2)U34)-methyltransferase; the sequence is MPDRLVPATL…EPALRVGEYA (235 aa). Positions 259–652 are FAD-dependent cmnm(5)s(2)U34 oxidoreductase; it reads IGAGLAGCAV…IRALRGRQIG (394 aa).

In the N-terminal section; belongs to the methyltransferase superfamily. tRNA (mnm(5)s(2)U34)-methyltransferase family. The protein in the C-terminal section; belongs to the DAO family. Requires FAD as cofactor.

The protein localises to the cytoplasm. It catalyses the reaction 5-aminomethyl-2-thiouridine(34) in tRNA + S-adenosyl-L-methionine = 5-methylaminomethyl-2-thiouridine(34) in tRNA + S-adenosyl-L-homocysteine + H(+). Its function is as follows. Catalyzes the last two steps in the biosynthesis of 5-methylaminomethyl-2-thiouridine (mnm(5)s(2)U) at the wobble position (U34) in tRNA. Catalyzes the FAD-dependent demodification of cmnm(5)s(2)U34 to nm(5)s(2)U34, followed by the transfer of a methyl group from S-adenosyl-L-methionine to nm(5)s(2)U34, to form mnm(5)s(2)U34. The polypeptide is tRNA 5-methylaminomethyl-2-thiouridine biosynthesis bifunctional protein MnmC (Burkholderia ambifaria (strain MC40-6)).